A 336-amino-acid chain; its full sequence is Inositol 2-dehydrogenase (336 aa).

Belongs to the Gfo/Idh/MocA family. In terms of assembly, homotetramer.

The catalysed reaction is myo-inositol + NAD(+) = scyllo-inosose + NADH + H(+). In terms of biological role, involved in the oxidation of myo-inositol (MI) to 2-keto-myo-inositol (2KMI or 2-inosose). The polypeptide is Inositol 2-dehydrogenase (Agrobacterium fabrum (strain C58 / ATCC 33970) (Agrobacterium tumefaciens (strain C58))).